The sequence spans 307 residues: MKDESALFTIDHIIKLDNGQSIRVWETLPKKNVPEKKNTILIASGFARRMDHFAGLAEYLSTNGFHVIRYDSLHHVGLSSGCINEFTMSIGKNSLLTVVDWLTDHGVERIGLIAASLSARIAYEVVNKIKLSFLITAVGVVNLRDTLEKALEYDYLQLPISELPEDLDFEGHNLGSEVFVTDCFKHDWDTLDSTLNSVKGLAIPFIAFTANDDSWVKQSEVIELIDSIESSNCKLYSLIGSSHDLGENLVVLRNFYQSVTKAALALDDGLLDLEIDIIEPRFEDVTSITVKERRLKNEIENELLELA.

Catalysis depends on charge relay system residues Ser-116, Asp-213, and His-243.

It belongs to the LuxD family.

Its pathway is lipid metabolism; fatty acid reduction for biolumincescence. In terms of biological role, acyl transferase is part of the fatty acid reductase system required for aldehyde biosynthesis; it produces fatty acids for the luminescent reaction. The sequence is that of Acyl transferase from Aliivibrio fischeri (strain MJ11) (Vibrio fischeri).